We begin with the raw amino-acid sequence, 332 residues long: Putative symporter YfeH (332 aa).

This sequence belongs to the bile acid:sodium symporter (BASS) (TC 2.A.28) family.

This Escherichia coli (strain K12) protein is Putative symporter YfeH (yfeH).